The sequence spans 229 residues: Putative germin-like protein 12-3 (229 aa).

Residues 1–22 (MASSNFFLLIPLIALVTTQAMA) form the signal peptide. Cys-32 and Cys-47 form a disulfide bridge. Residues 62-217 (ANLDKPMDIT…AFQVDKKAVD (156 aa)) enclose the Cupin type-1 domain. Asn-78 is a glycosylation site (N-linked (GlcNAc...) asparagine). His-111, His-113, Glu-118, and His-162 together coordinate Mn(2+).

The protein belongs to the germin family. As to quaternary structure, oligomer (believed to be a pentamer but probably hexamer).

The protein localises to the secreted. It is found in the extracellular space. It localises to the apoplast. In terms of biological role, may play a role in plant defense. Probably has no oxalate oxidase activity even if the active site is conserved. This is Putative germin-like protein 12-3 from Oryza sativa subsp. japonica (Rice).